The primary structure comprises 127 residues: Fatty acid binding protein 1-A, liver (127 aa).

This sequence belongs to the calycin superfamily. Fatty-acid binding protein (FABP) family. In terms of tissue distribution, in adults, weakly expressed in the intestine.

Its subcellular location is the cytoplasm. Binds free fatty acids and their coenzyme A derivatives, bilirubin, and some other small molecules in the cytoplasm. May be involved in intracellular lipid transport. In Danio rerio (Zebrafish), this protein is Fatty acid binding protein 1-A, liver.